Here is a 212-residue protein sequence, read N- to C-terminus: GTP-binding nuclear protein Ran (212 aa).

The 165-residue stretch at 3–167 (EKEQIKLVLV…VWLTSKLLGN (165 aa)) folds into the Small GTPase Ran-type domain. Residue 14–21 (DGGVGKTT) participates in GTP binding. The interval 33 to 41 (PRYIPTLGV) is switch-I. GTP contacts are provided by residues Gly-64, 118–121 (NKVD), and 146–148 (SAK). The tract at residues 64–80 (GQEKFGGLRDGYYIQGN) is switch-II.

The protein belongs to the small GTPase superfamily. Ran family. As to quaternary structure, found in a nuclear export complex with RanGTP, exportin and pre-miRNA.

It localises to the nucleus. Functionally, GTP-binding protein involved in nucleocytoplasmic transport. Required for the import of protein into the nucleus and also for RNA export. Involved in chromatin condensation and control of cell cycle. This chain is GTP-binding nuclear protein Ran (ranA), found in Dictyostelium discoideum (Social amoeba).